The sequence spans 342 residues: Ankyrin repeat domain-containing protein 2A (342 aa).

The disordered stretch occupies residues 1–41 (MASNSEKNPLLSDEKPKSTEENKSSKPESASGSSTSSAMPG). Basic and acidic residues predominate over residues 12–26 (SDEKPKSTEENKSSK). Low complexity predominate over residues 27-37 (PESASGSSTSS). ANK repeat units follow at residues 217–246 (EEESIVHQTASLGDVEGLKAALASGGNKDE), 250–279 (EGRTALHFACGYGELKCAQVLIDAGASVNA), 283–312 (NKNTPLHYAAGYGRKECVSLLLENGAAVTL), and 316–342 (DEKTPIDVAKLNSQLEVVKLLEKDAFL). Residues H223 and E246 each coordinate a 1,2-diacyl-3-O-(beta-D-galactosyl)-sn-glycerol. Y294 and R296 together coordinate a 1,2-diacyl-sn-glycero-3-phospho-(1'-sn-glycerol).

Interacts with TOM20-4, CYTB5-E, CBR1, APX3, APX5, TOC34 and GRF6. Binds to chloroplast outer envelope membrane (OEM) protein targeting signals, as well as to chloroplasts. Interacts with OEP7. Binds to HSP17.8 via its ankyrin repeats, this interaction enhances chaperone activity and chloroplast binding. Also interacts with HSP17.4A, HSP17.6A and HSP18.1. Binds specifically to two chloroplast glycolipids, monogalactosyldiacylglycerol (MGDG) and phosphatidylglycerol (PG). Ubiquitously expressed at basal level.

The protein resides in the cytoplasm. It is found in the nucleus. Its subcellular location is the plastid. The protein localises to the chloroplast outer membrane. Exhibits chaperone activity toward chloroplast outer envelope membrane, mitochondrion outer membrane, endoplasmic reticulum membrane and peroxisomal proteins, by recruiting specific proteins containing a single transmembrane associated with an AKR2A-binding sequence (ABS) and subsequently binding glycolipids (e.g. monogalactosyldiacylglycerol (MGDG) and phosphatidylglycerol (PG)) present in the membrane of the target organelle. Seems to be involved in the regulation of hydrogen peroxide levels during biotic and abiotic stresses by optimizing the ascorbate peroxidase 3 (APX3) hydrogen peroxide-degrading activity. This regulation might be monitored by GRF6. Cytosolic targeting factor for chloroplast outer membrane (COM) proteins that mediates sorting and targeting of nascent chloroplast outer envelope membrane (OEM) proteins to the chloroplast. Facilitates the targeting of OEP7 to chloroplasts. Facilitates the targeting of APX3 to peroxisomes. Involved in cellular metabolism (e.g. peroxisome activity) and required for plant growth and development. The polypeptide is Ankyrin repeat domain-containing protein 2A (Arabidopsis thaliana (Mouse-ear cress)).